The primary structure comprises 626 residues: Janus kinase and microtubule-interacting protein 1 (626 aa).

Residues 1–365 (MSKKGRSKGE…KIKNLTRENV (365 aa)) are mediates association with microtubules. Coiled-coil stretches lie at residues 19-254 (VQMA…REAE) and 284-413 (ERDV…DDLS). The mediates interaction with TYK2 and GABBR1 stretch occupies residues 365-626 (VEMKEKLSAQ…ILFEPKLKFM (262 aa)). Position 382 is a phosphoserine (Ser382). Positions 452-461 (ETLSETSCNT) are enriched in polar residues. Residues 452-480 (ETLSETSCNTDRTDRAPATPEEDLDDTTT) form a disordered region. Position 470 is a phosphothreonine (Thr470). A coiled-coil region spans residues 490-604 (QLTREYQALQ…EFRVLELEVR (115 aa)).

The protein belongs to the JAKMIP family. In terms of assembly, homodimer. Forms a complex with GABBR1 and KIF5B/kinesin-1. Interacts with JAK1 and TYK2. Phosphorylated.

The protein resides in the cytoplasm. The protein localises to the cytoskeleton. It localises to the membrane. Its function is as follows. Associates with microtubules and may play a role in the microtubule-dependent transport of the GABA-B receptor. May play a role in JAK1 signaling and regulate microtubule cytoskeleton rearrangements. The sequence is that of Janus kinase and microtubule-interacting protein 1 (JAKMIP1) from Bos taurus (Bovine).